The following is a 328-amino-acid chain: Ornithine transcarbamylase, mitochondrial (328 aa).

A mitochondrion-targeting transit peptide spans glycine 1 to glutamine 6. N6-acetyllysine; alternate is present on lysine 44. The residue at position 44 (lysine 44) is an N6-succinyllysine; alternate. Lysine 54 is modified (N6-succinyllysine). At lysine 62 the chain carries N6-acetyllysine; alternate. Residue lysine 62 is modified to N6-succinyllysine; alternate. Serine 64–arginine 68 is a binding site for carbamoyl phosphate. Serine 107 bears the Phosphoserine mark. Carbamoyl phosphate is bound at residue arginine 115. Arginine 115 contacts L-ornithine. Position 118 is an N6-acetyllysine; alternate (lysine 118). At lysine 118 the chain carries N6-succinyllysine; alternate. Histidine 142 serves as a coordination point for carbamoyl phosphate. Residue asparagine 173 participates in L-ornithine binding. An N6-acetyllysine; alternate mark is found at lysine 195, lysine 205, and lysine 212. N6-succinyllysine; alternate occurs at positions 195, 205, and 212. Aspartate 237–serine 241 lines the L-ornithine pocket. N6-succinyllysine occurs at positions 248 and 263. L-ornithine is bound at residue histidine 276–proline 279. The active site involves cysteine 277. N6-acetyllysine; alternate is present on lysine 281. Lysine 281 is modified (N6-succinyllysine; alternate). A carbamoyl phosphate-binding site is contributed by arginine 304. Arginine 304 contacts L-ornithine.

Belongs to the aspartate/ornithine carbamoyltransferase superfamily. OTCase family. Homotrimer. Post-translationally, acetylation at Lys-62 negatively regulates ornithine carbamoyltransferase activity in response to nutrient signals.

Its subcellular location is the mitochondrion matrix. The catalysed reaction is carbamoyl phosphate + L-ornithine = L-citrulline + phosphate + H(+). The protein operates within nitrogen metabolism; urea cycle; L-citrulline from L-ornithine and carbamoyl phosphate: step 1/1. Its activity is regulated as follows. Negatively regulated by lysine acetylation. Functionally, catalyzes the second step of the urea cycle, the condensation of carbamoyl phosphate with L-ornithine to form L-citrulline. The urea cycle ensures the detoxification of ammonia by converting it to urea for excretion. In Sus scrofa (Pig), this protein is Ornithine transcarbamylase, mitochondrial.